Consider the following 211-residue polypeptide: Rho-related GTP-binding protein RhoF (211 aa).

At methionine 1 the chain carries N-acetylmethionine. GTP is bound at residue 26 to 33 (GDGGCGKT). The Effector region motif lies at 48 to 56 (YAPSVFEKY). GTP-binding positions include 73-77 (DTAGQ) and 131-134 (CKTD). Cysteine 208 is subject to Cysteine methyl ester. Cysteine 208 is lipidated: S-geranylgeranyl cysteine. The propeptide at 209-211 (LLL) is removed in mature form.

Belongs to the small GTPase superfamily. Rho family.

Its subcellular location is the cell membrane. The protein localises to the cytoplasm. It localises to the cytoskeleton. In terms of biological role, plasma membrane-associated small GTPase which cycles between an active GTP-bound and an inactive GDP-bound state. Causes the formation of thin, actin-rich surface projections called filopodia. Functions cooperatively with CDC42 and Rac to generate additional structures, increasing the diversity of actin-based morphology. This Homo sapiens (Human) protein is Rho-related GTP-binding protein RhoF (RHOF).